A 237-amino-acid polypeptide reads, in one-letter code: tRNA1(Val) (adenine(37)-N6)-methyltransferase (237 aa).

It belongs to the methyltransferase superfamily. tRNA (adenine-N(6)-)-methyltransferase family.

Its subcellular location is the cytoplasm. It carries out the reaction adenosine(37) in tRNA1(Val) + S-adenosyl-L-methionine = N(6)-methyladenosine(37) in tRNA1(Val) + S-adenosyl-L-homocysteine + H(+). Functionally, specifically methylates the adenine in position 37 of tRNA(1)(Val) (anticodon cmo5UAC). The sequence is that of tRNA1(Val) (adenine(37)-N6)-methyltransferase from Bacteroides fragilis (strain YCH46).